A 134-amino-acid chain; its full sequence is Putative pre-16S rRNA nuclease (134 aa).

It belongs to the YqgF nuclease family.

The protein resides in the cytoplasm. In terms of biological role, could be a nuclease involved in processing of the 5'-end of pre-16S rRNA. This is Putative pre-16S rRNA nuclease from Hydrogenovibrio crunogenus (strain DSM 25203 / XCL-2) (Thiomicrospira crunogena).